Reading from the N-terminus, the 158-residue chain is Low molecular weight phosphotyrosine protein phosphatase (158 aa).

Residue Ala2 is modified to N-acetylalanine. The Nucleophile role is filled by Cys13. Arg19 is a catalytic residue. Asp130 serves as the catalytic Proton donor. A phosphotyrosine mark is found at Tyr132 and Tyr133.

Belongs to the low molecular weight phosphotyrosine protein phosphatase family.

The protein resides in the cytoplasm. It catalyses the reaction O-phospho-L-tyrosyl-[protein] + H2O = L-tyrosyl-[protein] + phosphate. It carries out the reaction a phosphate monoester + H2O = an alcohol + phosphate. Functionally, acts on tyrosine phosphorylated proteins, low-MW aryl phosphates and natural and synthetic acyl phosphates. This Gallus gallus (Chicken) protein is Low molecular weight phosphotyrosine protein phosphatase (ACP1).